The chain runs to 366 residues: Variable large protein 10 (366 aa).

An N-terminal signal peptide occupies residues 1–18 (MRKRISAIIMTLFMVLAS). Cys19 carries the N-palmitoyl cysteine lipid modification. Cys19 is lipidated: S-diacylglycerol cysteine.

Belongs to the variable large protein (Vlp) family. Beta subfamily.

Its subcellular location is the cell outer membrane. The Vlp and Vsp proteins are antigenically distinct proteins, only one vlp or vsp gene is transcriptionally active at any one time. Switching between these genes is a mechanism of host immune response evasion. In Borrelia hermsii, this protein is Variable large protein 10.